A 91-amino-acid polypeptide reads, in one-letter code: Small ribosomal subunit protein uS15 (91 aa).

Belongs to the universal ribosomal protein uS15 family. Part of the 30S ribosomal subunit. Forms a bridge to the 50S subunit in the 70S ribosome, contacting the 23S rRNA.

Its function is as follows. One of the primary rRNA binding proteins, it binds directly to 16S rRNA where it helps nucleate assembly of the platform of the 30S subunit by binding and bridging several RNA helices of the 16S rRNA. In terms of biological role, forms an intersubunit bridge (bridge B4) with the 23S rRNA of the 50S subunit in the ribosome. This chain is Small ribosomal subunit protein uS15, found in Deinococcus geothermalis (strain DSM 11300 / CIP 105573 / AG-3a).